The following is a 147-amino-acid chain: Large ribosomal subunit protein bL9 (147 aa).

The protein belongs to the bacterial ribosomal protein bL9 family.

Functionally, binds to the 23S rRNA. The polypeptide is Large ribosomal subunit protein bL9 (Exiguobacterium sp. (strain ATCC BAA-1283 / AT1b)).